The chain runs to 367 residues: Undecaprenyl-phosphate alpha-N-acetylglucosaminyl 1-phosphate transferase (367 aa).

9 consecutive transmembrane segments (helical) span residues 3–23, 45–65, 69–89, 129–149, 158–178, 187–207, 213–233, 242–262, and 318–338; these read LLTA…FIFL, GVIP…MFGL, YIPH…VGAM, WELV…WAAI, IDGL…LILW, MWCF…LGIL, VFMG…LLLE, ISPV…VAIM, and VPEW…GYCI.

The protein belongs to the glycosyltransferase 4 family. WecA subfamily. Mg(2+) serves as cofactor. Requires Mn(2+) as cofactor.

It localises to the cell inner membrane. It carries out the reaction di-trans,octa-cis-undecaprenyl phosphate + UDP-N-acetyl-alpha-D-glucosamine = N-acetyl-alpha-D-glucosaminyl-di-trans,octa-cis-undecaprenyl diphosphate + UMP. The protein operates within bacterial outer membrane biogenesis; LPS O-antigen biosynthesis. It participates in bacterial outer membrane biogenesis; enterobacterial common antigen biosynthesis. Its activity is regulated as follows. Inhibited by tunicamycin. Its function is as follows. Catalyzes the transfer of the GlcNAc-1-phosphate moiety from UDP-GlcNAc onto the carrier lipid undecaprenyl phosphate (C55-P), yielding GlcNAc-pyrophosphoryl-undecaprenyl (GlcNAc-PP-C55). The protein is Undecaprenyl-phosphate alpha-N-acetylglucosaminyl 1-phosphate transferase of Salmonella typhimurium (strain LT2 / SGSC1412 / ATCC 700720).